The following is a 382-amino-acid chain: ATP phosphoribosyltransferase regulatory subunit (382 aa).

This sequence belongs to the class-II aminoacyl-tRNA synthetase family. HisZ subfamily. As to quaternary structure, heteromultimer composed of HisG and HisZ subunits.

Its subcellular location is the cytoplasm. It participates in amino-acid biosynthesis; L-histidine biosynthesis; L-histidine from 5-phospho-alpha-D-ribose 1-diphosphate: step 1/9. Its function is as follows. Required for the first step of histidine biosynthesis. May allow the feedback regulation of ATP phosphoribosyltransferase activity by histidine. The chain is ATP phosphoribosyltransferase regulatory subunit from Burkholderia lata (strain ATCC 17760 / DSM 23089 / LMG 22485 / NCIMB 9086 / R18194 / 383).